Here is a 588-residue protein sequence, read N- to C-terminus: Probable fumarate reductase Ifc3 (588 aa).

Residues 1–22 (MKLKYLVSAMALVVLSSGTAMA) form the signal peptide. His-31, Cys-37, Cys-40, His-41, Cys-58, Cys-61, His-62, His-78, His-81, Cys-87, Cys-90, His-91, Gly-93, His-94, Cys-101, Cys-104, and His-105 together coordinate heme c. The tract at residues 135–588 (AIAAGPSETT…DNAAKHALDK (454 aa)) is flavoprotein-like. FAD is bound by residues Ala-154, Asp-173, Asn-181, Ser-182, Gly-187, and Gly-188. Gly-187 contributes to the fumarate binding site. A succinate-binding site is contributed by Gly-187. Arg-218 contacts heme c. 2 residues coordinate FAD: Val-295 and Asp-361. Positions 382, 394, and 395 each coordinate succinate. Ser-394 and Glu-395 together coordinate fumarate. The active-site Proton donor is Arg-419. Fumarate is bound at residue His-521. His-521 contacts succinate. Residue Glu-551 coordinates FAD. Fumarate contacts are provided by Arg-561 and Gly-564. 2 residues coordinate succinate: Arg-561 and Gly-564. 3 residues coordinate FAD: Gly-564, Ala-566, and Ile-567.

As to quaternary structure, homodimer. The cofactor is FAD. Heme c serves as cofactor.

Its subcellular location is the periplasm. In terms of biological role, flavocytochrome that catalyzes the reduction of fumarate to succinate in vitro. Is essentially unidirectional, catalyzing only fumarate reduction. In vitro, can use the artificial electron donor methyl viologen. May be involved in an alternative route for electron transport to Fe(3+). The protein is Probable fumarate reductase Ifc3 of Shewanella frigidimarina (strain NCIMB 400).